The following is a 504-amino-acid chain: Bifunctional purine biosynthesis protein PurH (504 aa).

In terms of domain architecture, MGS-like spans 1–144 (MRKRALISVY…KSFKNVVVIS (144 aa)).

Belongs to the PurH family.

It carries out the reaction (6R)-10-formyltetrahydrofolate + 5-amino-1-(5-phospho-beta-D-ribosyl)imidazole-4-carboxamide = 5-formamido-1-(5-phospho-D-ribosyl)imidazole-4-carboxamide + (6S)-5,6,7,8-tetrahydrofolate. It catalyses the reaction IMP + H2O = 5-formamido-1-(5-phospho-D-ribosyl)imidazole-4-carboxamide. It functions in the pathway purine metabolism; IMP biosynthesis via de novo pathway; 5-formamido-1-(5-phospho-D-ribosyl)imidazole-4-carboxamide from 5-amino-1-(5-phospho-D-ribosyl)imidazole-4-carboxamide (10-formyl THF route): step 1/1. The protein operates within purine metabolism; IMP biosynthesis via de novo pathway; IMP from 5-formamido-1-(5-phospho-D-ribosyl)imidazole-4-carboxamide: step 1/1. The sequence is that of Bifunctional purine biosynthesis protein PurH from Fusobacterium nucleatum subsp. nucleatum (strain ATCC 25586 / DSM 15643 / BCRC 10681 / CIP 101130 / JCM 8532 / KCTC 2640 / LMG 13131 / VPI 4355).